The primary structure comprises 538 residues: Carotenoid 9,10(9',10')-cleavage dioxygenase 1 (538 aa).

The Fe cation site is built by H222, H270, H336, and H523.

It belongs to the carotenoid oxygenase family. Homodimer. Fe(2+) is required as a cofactor. High expression in flowers and siliques. Also detected in stems, leaves and roots.

It localises to the cytoplasm. The catalysed reaction is all-trans-zeaxanthin + 2 O2 = 4,9-dimethyldodeca-2,4,6,8,10-pentaenedial + 2 (3R)-hydroxy-beta-ionone. Cleaves a variety of carotenoids symmetrically at both the 9-10 and 9'-10' double bonds. Active on beta,beta-carotene, lutein, zeaxanthin, all-trans-violaxanthin, 9-cis-violaxanthin and 9'-cis-neoxanthin. With most substrates, the carotenoid is symmetrically cleaved. Probably not involved in abscisic acid biosynthesis. In Arabidopsis thaliana (Mouse-ear cress), this protein is Carotenoid 9,10(9',10')-cleavage dioxygenase 1 (CCD1).